A 313-amino-acid polypeptide reads, in one-letter code: uncharacterized protein (313 aa).

9 consecutive transmembrane segments (helical) span residues 31–53, 62–84, 104–126, 147–161, 166–185, 198–220, 225–244, 264–282, and 286–308; these read AWGI…GWLF, LFLF…WNPY, VFFW…IYTS, FALL…NQSV, SMFW…SFLL, RVLK…ALRF, SFSG…YLII, FFAA…TSSF, and PAAM…SILI.

The protein resides in the cell membrane. This is an uncharacterized protein from Archaeoglobus fulgidus (strain ATCC 49558 / DSM 4304 / JCM 9628 / NBRC 100126 / VC-16).